Consider the following 159-residue polypeptide: Probable acetolactate synthase small subunit (159 aa).

One can recognise an ACT domain in the interval 4 to 78 (TIAVLVENKP…ETIKVSEITE (75 aa)).

This sequence belongs to the acetolactate synthase small subunit family. Dimer of large and small chains.

It catalyses the reaction 2 pyruvate + H(+) = (2S)-2-acetolactate + CO2. Its pathway is amino-acid biosynthesis; L-isoleucine biosynthesis; L-isoleucine from 2-oxobutanoate: step 1/4. It functions in the pathway amino-acid biosynthesis; L-valine biosynthesis; L-valine from pyruvate: step 1/4. This is Probable acetolactate synthase small subunit (ilvH) from Archaeoglobus fulgidus (strain ATCC 49558 / DSM 4304 / JCM 9628 / NBRC 100126 / VC-16).